A 122-amino-acid chain; its full sequence is Small ribosomal subunit protein uS13 (122 aa).

Residues 99 to 122 (RGQRTHTNARTRKGPAKAIAGKKK) are disordered.

It belongs to the universal ribosomal protein uS13 family. As to quaternary structure, part of the 30S ribosomal subunit. Forms a loose heterodimer with protein S19. Forms two bridges to the 50S subunit in the 70S ribosome.

In terms of biological role, located at the top of the head of the 30S subunit, it contacts several helices of the 16S rRNA. In the 70S ribosome it contacts the 23S rRNA (bridge B1a) and protein L5 of the 50S subunit (bridge B1b), connecting the 2 subunits; these bridges are implicated in subunit movement. Contacts the tRNAs in the A and P-sites. This chain is Small ribosomal subunit protein uS13, found in Bradyrhizobium diazoefficiens (strain JCM 10833 / BCRC 13528 / IAM 13628 / NBRC 14792 / USDA 110).